We begin with the raw amino-acid sequence, 110 residues long: Large ribosomal subunit protein uL22 (110 aa).

The protein belongs to the universal ribosomal protein uL22 family. As to quaternary structure, part of the 50S ribosomal subunit.

Its function is as follows. This protein binds specifically to 23S rRNA; its binding is stimulated by other ribosomal proteins, e.g. L4, L17, and L20. It is important during the early stages of 50S assembly. It makes multiple contacts with different domains of the 23S rRNA in the assembled 50S subunit and ribosome. The globular domain of the protein is located near the polypeptide exit tunnel on the outside of the subunit, while an extended beta-hairpin is found that lines the wall of the exit tunnel in the center of the 70S ribosome. The sequence is that of Large ribosomal subunit protein uL22 from Acidovorax ebreus (strain TPSY) (Diaphorobacter sp. (strain TPSY)).